Reading from the N-terminus, the 482-residue chain is Programmed cell death protein 7 (482 aa).

Disordered regions lie at residues 1-136 and 151-170; these read MALP…GDAA and GNPR…GPSL. Over residues 13–48 the composition is skewed to pro residues; it reads GPPPPQPPPSAPFGCPPPPLPSPAFPPPLPQRPGPF. The span at 49 to 71 shows a compositional bias: low complexity; sequence PGASAPFLQPPLALQPRAPAEAS. Composition is skewed to pro residues over residues 82-100 and 109-130; these read PVPP…PFPG and PPPP…PPPD. The span at 151–168 shows a compositional bias: low complexity; that stretch reads GNPRRPGGLRTPRTPAGP. Residues 233–408 adopt a coiled-coil conformation; that stretch reads EARRRLERVR…LQKREIESKL (176 aa).

As to quaternary structure, interacts with RBM40. Component of the U11/U12 snRNPs that are part of the U12-type spliceosome. As to expression, highly expressed in testis, thymus and lymph nodes. Detected at low levels in embryonic stem cells.

The protein localises to the nucleus. In terms of biological role, promotes apoptosis when overexpressed. This chain is Programmed cell death protein 7 (Pdcd7), found in Mus musculus (Mouse).